A 141-amino-acid chain; its full sequence is Sperm-associated microtubule inner protein 10 (141 aa).

The span at 1 to 16 (MASEKDDGPALPKLDD) shows a compositional bias: basic and acidic residues. The tract at residues 1–33 (MASEKDDGPALPKLDDDNQTAENTCKPAEEQPQ) is disordered.

As to quaternary structure, microtubule inner protein component of sperm flagellar doublet microtubules. In terms of tissue distribution, expressed predominantly in the testis.

Its subcellular location is the cytoplasm. The protein resides in the cytoskeleton. The protein localises to the flagellum axoneme. Its function is as follows. Microtubule inner protein (MIP) part of the dynein-decorated doublet microtubules (DMTs) in flagellum axoneme, which is required for flagellum beating. May serve to reinforce and thus stabilize the microtubule structure in the sperm flagella. Involved in the regulation of sperm motility. The polypeptide is Sperm-associated microtubule inner protein 10 (Spmip10) (Mus musculus (Mouse)).